The primary structure comprises 147 residues: Hemoglobin subunit beta (147 aa).

An N-acetylvaline modification is found at valine 2. Residues 3–147 (HLTAEEKAAV…VATALAHKYH (145 aa)) enclose the Globin domain. Position 13 is a phosphothreonine (threonine 13). Serine 45 is modified (phosphoserine). Residue lysine 60 is modified to N6-acetyllysine. Heme b is bound at residue histidine 64. Lysine 83 is modified (N6-acetyllysine). Histidine 93 serves as a coordination point for heme b. Cysteine 94 is modified (S-nitrosocysteine). Lysine 145 carries the N6-acetyllysine modification.

The protein belongs to the globin family. Heterotetramer of two alpha chains and two beta chains. As to expression, red blood cells.

Involved in oxygen transport from the lung to the various peripheral tissues. This Carlito syrichta (Philippine tarsier) protein is Hemoglobin subunit beta (HBB).